The sequence spans 213 residues: Peptidyl-tRNA hydrolase (213 aa).

A tRNA-binding site is contributed by tyrosine 15. The active-site Proton acceptor is histidine 20. TRNA-binding residues include tyrosine 66, asparagine 68, and asparagine 114. Residues 186–213 (MHAKPPRPKPPRPVTAPGAPVPPTEPSA) form a disordered region. The segment covering 196 to 213 (PRPVTAPGAPVPPTEPSA) has biased composition (pro residues).

It belongs to the PTH family. As to quaternary structure, monomer.

The protein localises to the cytoplasm. The enzyme catalyses an N-acyl-L-alpha-aminoacyl-tRNA + H2O = an N-acyl-L-amino acid + a tRNA + H(+). Functionally, hydrolyzes ribosome-free peptidyl-tRNAs (with 1 or more amino acids incorporated), which drop off the ribosome during protein synthesis, or as a result of ribosome stalling. In terms of biological role, catalyzes the release of premature peptidyl moieties from peptidyl-tRNA molecules trapped in stalled 50S ribosomal subunits, and thus maintains levels of free tRNAs and 50S ribosomes. The protein is Peptidyl-tRNA hydrolase of Leptothrix cholodnii (strain ATCC 51168 / LMG 8142 / SP-6) (Leptothrix discophora (strain SP-6)).